The primary structure comprises 833 residues: Patatin-like phospholipase domain-containing protein SNOG_00918 (833 aa).

2 disordered regions span residues 1–20 (MTDV…SAFD) and 49–71 (HLSP…SANN). A helical transmembrane segment spans residues 108–128 (WPLLVVVLGWLLFLSIAYVFT). One can recognise a PNPLA domain in the interval 301-457 (LCLSGGATFA…RTDIPLKALN (157 aa)). The GXSXG motif lies at 332–336 (GTSGG). The active-site Nucleophile is Ser334. The active-site Proton acceptor is the Asp444. Disordered regions lie at residues 630–657 (TKSK…FSRP) and 680–833 (LRTD…GKGL). Low complexity predominate over residues 644–655 (SGSESSSSADFS). The segment covering 689-707 (DTPNSPSLSARLTGWWNTK) has biased composition (polar residues). Composition is skewed to basic and acidic residues over residues 740-750 (RPPKEVRDLQA), 759-769 (RNSDFLEEIRR), and 782-794 (DEGR…RGDV). Positions 809–819 (EFGDNEGDGEE) are enriched in acidic residues.

It belongs to the PLPL family.

The protein localises to the membrane. In terms of biological role, probable lipid hydrolase. The protein is Patatin-like phospholipase domain-containing protein SNOG_00918 of Phaeosphaeria nodorum (strain SN15 / ATCC MYA-4574 / FGSC 10173) (Glume blotch fungus).